Consider the following 402-residue polypeptide: 2,3-bisphosphoglycerate-independent phosphoglycerate mutase 2 (402 aa).

The protein belongs to the BPG-independent phosphoglycerate mutase family. A-PGAM subfamily.

The enzyme catalyses (2R)-2-phosphoglycerate = (2R)-3-phosphoglycerate. It participates in carbohydrate degradation; glycolysis; pyruvate from D-glyceraldehyde 3-phosphate: step 3/5. In terms of biological role, catalyzes the interconversion of 2-phosphoglycerate and 3-phosphoglycerate. This Methanothermobacter thermautotrophicus (strain ATCC 29096 / DSM 1053 / JCM 10044 / NBRC 100330 / Delta H) (Methanobacterium thermoautotrophicum) protein is 2,3-bisphosphoglycerate-independent phosphoglycerate mutase 2 (apgM2).